We begin with the raw amino-acid sequence, 305 residues long: MYNGILPVYKERGLTSHDVVFKLRKILKTKKIGHTGTLDPEVAGVLPVCIGNATRVSDYVMDMGKAYEATVSIGRSTTTEDQTGDTLETKGVHSADFNKDDIDRLLENFKGVIEQIPPMYSSVKVNGKKLYEYARNNETVERPKRKVNIKDIGRISELDFKENECHFKIRVICGKGTYIRTLATDIGVKLGFPAHMSKLTRIESGGFVLKDSLTLEQIKELHEQDSLQNKLFPLEYGLKGLPSIKIKDSHIKKRILNGQKFNKNEFDNKIKDQIVFIDDDSEKVLAIYMVHPTKESEIKPKKVFN.

The active-site Nucleophile is aspartate 39.

Belongs to the pseudouridine synthase TruB family. Type 1 subfamily.

It carries out the reaction uridine(55) in tRNA = pseudouridine(55) in tRNA. Its function is as follows. Responsible for synthesis of pseudouridine from uracil-55 in the psi GC loop of transfer RNAs. The chain is tRNA pseudouridine synthase B from Staphylococcus aureus (strain Mu50 / ATCC 700699).